Reading from the N-terminus, the 973-residue chain is E3 ubiquitin-protein ligase MIB2 (973 aa).

One can recognise an MIB/HERC2 1 domain in the interval 1 to 80; it reads MDLDPHAGVQ…AHDLLLYDNA (80 aa). The ZZ-type zinc-finger motif lies at 86–138; sequence HPNIICDCCKKHGLRGMRWKCRVCFDYDLCTQCYMHNKHDLTHAFERYETSHS. Zn(2+) contacts are provided by Cys91, Cys94, Cys106, Cys109, Cys115, Cys118, His124, and His128. The 79-residue stretch at 149–227 folds into the MIB/HERC2 2 domain; sequence LPRIPLRGIF…KVDLRCVGEA (79 aa). At Ser251 the chain carries Phosphoserine. 9 ANK repeats span residues 480 to 509, 513 to 542, 546 to 575, 579 to 611, 615 to 644, 649 to 679, 683 to 712, 716 to 744, and 785 to 814; these read QGRT…SMDL, EGNT…AVDA, TRST…DVNL, HADT…DVTA, QGFT…QLVD, DGFT…DVNV, KLQS…SVNT, EGDT…DPGP, and RGRS…ERQA. 2 RING-type zinc fingers span residues 850 to 885 and 929 to 962; these read CLVC…IRCQ and CPIC…PICR.

Interacts with actin monomer. Ubiquitinated. Possibly via autoubiquitination. In terms of tissue distribution, highly expressed in brain, heart, liver and kidney.

It localises to the cytoplasm. Its subcellular location is the endosome. The catalysed reaction is S-ubiquitinyl-[E2 ubiquitin-conjugating enzyme]-L-cysteine + [acceptor protein]-L-lysine = [E2 ubiquitin-conjugating enzyme]-L-cysteine + N(6)-ubiquitinyl-[acceptor protein]-L-lysine.. Its pathway is protein modification; protein ubiquitination. Functionally, E3 ubiquitin-protein ligase that mediates ubiquitination of Delta receptors, which act as ligands of Notch proteins. Positively regulates the Delta-mediated Notch signaling by ubiquitinating the intracellular domain of Delta, leading to endocytosis of Delta receptors. This Mus musculus (Mouse) protein is E3 ubiquitin-protein ligase MIB2 (Mib2).